The sequence spans 486 residues: MEATPTPADLFSEDYLVDTLDGLTVDDQQAVLASLSFSKFLKHAKVRDWCAQAKIQPSMPALRMAYNYFLFSKVGEFIGSEDVCNFFVDRVFGGVRLLDVASVYAACSQMNAHQRHHICCLVERATSSQSLNPVWDALRDGIISSSKFHWAVKQQNTSKKIFSPWPITNNHFVAGPLAFGLRCEEVVKTLLATLLHPDEANCLDYGFMQSPQNGIFGVSLDFAANVKTDTEGRLQFDPNCKVYEIKCRFKYTFAKMECDPIYAAYQRLYEAPGKLALKDFFYSISKPAVEYVGLGKLPSESDYLVAYDQEWEACPRKKRKLTPLHNLIRECILHNSTTESDVYVLTDPQDTRGQISIKARFKANLFVNVRHSYFYQVLLQSSIVEEYIGLDSGIPRLGSPKYYIATGFFRKRGYQDPVNCTIGGDALDPHVEIPTLLIVTPVYFPRGAKHRLLHQAANFWSRSAKDTFPYIKWDFSYLSANVPHSP.

It belongs to the herpesviridae alkaline nuclease family. As to quaternary structure, forms a complex with the DNA polymerase, the DNA polymerase processivity factor, and the major DNA binding protein.

The protein localises to the host nucleus. The protein resides in the host cytoplasm. Functionally, plays a role in processing non linear or branched viral DNA intermediates in order to promote the production of mature packaged unit-length linear progeny viral DNA molecules. Exhibits endonuclease and exonuclease activities and accepts both double-stranded and single-stranded DNA as substrate. Exonuclease digestion of DNA is in the 5'-&gt; 3' direction and the products are 5'-monophosphate nucleosides. Additionally, forms a recombinase with the major DNA-binding protein, which displays strand exchange activity. Also acts as a cytoplasmic RNA endonuclease that induces degradation of the majority of the cellular messenger RNAs during early lytic infection. The resulting inhibition of cellular protein synthesis serves to ensure maximal viral gene expression and evasion from host immune response. Internally cleaves host mRNAs which are then degraded by the cellular exonuclease XRN1. Bypasses therefore the regulatory steps of deadenylation and decapping normally required for XRN1 activation. In addition, inhibits host inflammasome activation to promote viral lytic replication by interacting with host AIM2 and disrupting its polymerization. This Human herpesvirus 8 type P (isolate GK18) (HHV-8) protein is Shutoff alkaline exonuclease (ORF37).